The following is a 241-amino-acid chain: Sugar fermentation stimulation protein homolog (241 aa).

This sequence belongs to the SfsA family.

In Trichormus variabilis (strain ATCC 29413 / PCC 7937) (Anabaena variabilis), this protein is Sugar fermentation stimulation protein homolog.